A 321-amino-acid polypeptide reads, in one-letter code: Lipoyl synthase (321 aa).

Positions 68, 73, 79, 94, 98, 101, and 308 each coordinate [4Fe-4S] cluster. In terms of domain architecture, Radical SAM core spans 80-297; the sequence is FNHGTATFMI…REFAESIGFT (218 aa).

The protein belongs to the radical SAM superfamily. Lipoyl synthase family. [4Fe-4S] cluster serves as cofactor.

It localises to the cytoplasm. It carries out the reaction [[Fe-S] cluster scaffold protein carrying a second [4Fe-4S](2+) cluster] + N(6)-octanoyl-L-lysyl-[protein] + 2 oxidized [2Fe-2S]-[ferredoxin] + 2 S-adenosyl-L-methionine + 4 H(+) = [[Fe-S] cluster scaffold protein] + N(6)-[(R)-dihydrolipoyl]-L-lysyl-[protein] + 4 Fe(3+) + 2 hydrogen sulfide + 2 5'-deoxyadenosine + 2 L-methionine + 2 reduced [2Fe-2S]-[ferredoxin]. Its pathway is protein modification; protein lipoylation via endogenous pathway; protein N(6)-(lipoyl)lysine from octanoyl-[acyl-carrier-protein]: step 2/2. Its function is as follows. Catalyzes the radical-mediated insertion of two sulfur atoms into the C-6 and C-8 positions of the octanoyl moiety bound to the lipoyl domains of lipoate-dependent enzymes, thereby converting the octanoylated domains into lipoylated derivatives. This Shewanella sediminis (strain HAW-EB3) protein is Lipoyl synthase.